Consider the following 165-residue polypeptide: MAFENKIVEAFIEIPTGSQNKYEFDKERGIFKLDRVLYSPMFYPAEYGYLQNTLALDGDPLDILVITTNPTFPGCVIDTRVIGYLNMVDSGEEDAKLIGVPVEDPRFDEVRSIEDLPQHKLKEIAHFFERYKDLQGKRTEIGTWEGPEAAAKLIDECIARYNEQK.

Substrate-binding residues include Lys-21, Arg-35, and Tyr-47. Mg(2+)-binding residues include Asp-57, Asp-62, and Asp-94. Tyr-131 serves as a coordination point for substrate.

This sequence belongs to the PPase family. As to quaternary structure, homohexamer. Requires Mg(2+) as cofactor.

Its subcellular location is the cytoplasm. It carries out the reaction diphosphate + H2O = 2 phosphate + H(+). Functionally, catalyzes the hydrolysis of inorganic pyrophosphate (PPi) forming two phosphate ions. This Geobacillus stearothermophilus (Bacillus stearothermophilus) protein is Inorganic pyrophosphatase.